We begin with the raw amino-acid sequence, 676 residues long: MTPGIRAPFLLTLLLALVTDPNSVALSQDTSSSSTLNTTPVHSGSSAPATSSAVDSATTPGHSGSSAPPTSSAVNSATTPGHSGSSAPPTSSAVNSATTPVHSGSSAPVTSSAVNSATTPVHSGSSAPPTSSAVNSATTPVHSGSSAPVTSSAVNSATTPVHSGSSAPVTSSAVDSATTPVHSGSSAPPTSSAVNSATTPVHSGSSAPVTSSAVNSATTPVHSGSSAPVTSSAVNSATTPVHSGSSAPPTSSVVNSATTPVHSGSSAPPTSSAVNLATTPVHSGSSTPATNSTTDSATTPVPPGSSMQTTEAISGSANTPIHNGSLVPTTSSALVPTTSAAHSGASAMTNSSESDLATTPIDSGTSISTTKAPATTPVHNGSLVPTTSSVLGSATTLIHNDTSTMATTTPVGNGTQSSVPSRHPVTPTPPAVSSNSTIALSTYYSTALSPAFSSHAAPQVSVGVSFFLLSFHIWNHQFNSSLEDPSSNYYQELKRNVSGLFLQVFSRAFLGISTIEFRSGSVVVDSTVIFREGAVNASEVKSQLLQHEQEAEEYNLAISKINVGEMQFPSSAQSWPGVPGWGIALLVLVCILVALAIVYLIALAVCQCRRKNYGQLDIFPIQDSYHPMSEYPTYHTHGRYVPPGSTKRSPYEEVSAGNGSSLSYTNPVVATTSANL.

Residues 1–25 form the signal peptide; that stretch reads MTPGIRAPFLLTLLLALVTDPNSVA. The interval 25-387 is disordered; it reads ALSQDTSSSS…VHNGSLVPTT (363 aa). The Extracellular portion of the chain corresponds to 26-582; it reads LSQDTSSSST…QSWPGVPGWG (557 aa). 13 consecutive repeat copies span residues 40–59, 60–79, 80–99, 100–119, 120–139, 140–159, 160–179, 180–199, 200–219, 220–239, 240–259, 260–279, and 280–299. The 13 X approximate tandem repeats of P-V-H-S-G-S-S-A-P-P-T-S-S-A-V-N-S-A-T-T stretch occupies residues 40–314; sequence PVHSGSSAPA…SSMQTTEAIS (275 aa). 3 O-linked (GalNAc...) serine glycosylation sites follow: Ser-43, Ser-45, and Ser-46. O-linked (GalNAc...) threonine glycosylation is present at Thr-50. O-linked (GalNAc...) serine glycans are attached at residues Ser-51, Ser-52, and Ser-56. Thr-58 and Thr-59 each carry an O-linked (GalNAc...) threonine glycan. Residues Asn-291, Asn-323, Asn-350, Asn-380, Asn-400, Asn-413, Asn-435, Asn-479, Asn-496, and Asn-536 are each glycosylated (N-linked (GlcNAc...) asparagine). Residues 404-420 are compositionally biased toward polar residues; the sequence is TMATTTPVGNGTQSSVP. The interval 404–434 is disordered; that stretch reads TMATTTPVGNGTQSSVPSRHPVTPTPPAVSS. An SEA domain is found at 463-570; that stretch reads GVSFFLLSFH…INVGEMQFPS (108 aa). Residues 583–603 form a helical membrane-spanning segment; the sequence is IALLVLVCILVALAIVYLIAL. Over 604 to 676 the chain is Cytoplasmic; it reads AVCQCRRKNY…PVVATTSANL (73 aa). Residues Cys-606 and Cys-608 are each lipidated (S-palmitoyl cysteine). The interval 614–650 is interaction with P53; the sequence is GQLDIFPIQDSYHPMSEYPTYHTHGRYVPPGSTKRSP. The residue at position 625 (Tyr-625) is a Phosphotyrosine; by PDGFR. An Interaction with GRB2 motif is present at residues 625 to 628; it reads YHPM. A Phosphotyrosine modification is found at Tyr-634. A disordered region spans residues 636 to 659; that stretch reads THGRYVPPGSTKRSPYEEVSAGNG. Tyr-640 carries the post-translational modification Phosphotyrosine; by PDGFR. The segment at 645–652 is required for interaction with GSK3B; it reads STKRSPYE. The residue at position 646 (Thr-646) is a Phosphothreonine; by PKC/PRKCD. Residue Ser-649 is modified to Phosphoserine; by GSK3-beta. The residue at position 651 (Tyr-651) is a Phosphotyrosine; by CSK, EGFR and SRC. Positions 651 to 654 match the Interaction with SRC and ESR1 motif; sequence YEEV. The required for interaction with beta- and gamma-catenins stretch occupies residues 655–662; it reads SAGNGSSL. At Tyr-664 the chain carries Phosphotyrosine. The Required for interaction with AP1S2 motif lies at 664 to 667; the sequence is YTNP.

As to quaternary structure, the alpha subunit forms a tight, non-covalent heterodimeric complex with the proteolytically-released beta-subunit. Binds directly the SH2 domain of GRB2, and forms a MUC1/GRB2/SOS1 complex involved in RAS signaling. The cytoplasmic tail (MUC1CT) interacts with several proteins such as SRC, CTNNB1 and ERBs. Interaction with the SH2 domain of CSK decreases interaction with GSK3B. Interacts with CTNNB1/beta-catenin and JUP/gamma-catenin and promotes cell adhesion. Interaction with JUP/gamma-catenin is induced by heregulin. Binds PRKCD, ERBB2, ERBB3 and ERBB4. Heregulin (HRG) stimulates the interaction with ERBB2 and, to a much lesser extent, the interaction with ERBB3 and ERBB4. Interacts with P53 in response to DNA damage. Interacts with KLF4. Interacts with estrogen receptor alpha/ESR1, through its DNA-binding domain, and stimulates its transcription activity. Binds ADAM17. Probably both N- and O-glycosylated (in repeat region). Post-translationally, proteolytic cleavage in the SEA domain occurs in the endoplasmic reticulum by an autoproteolytic mechanism and requires the full-length SEA domain as well as requiring a Ser, Thr or Cys residue at the P + 1 site. Ectodomain shedding is mediated by ADAM17 in uterine epithelial cells. In terms of processing, dual palmitoylation on cysteine residues in the CQC motif is required for recycling from endosomes back to the plasma membrane. Phosphorylated on tyrosines and serine residues in the C-terminal. Phosphorylation on tyrosines in the C-terminal increases the nuclear location of MUC1 and beta-catenin. Phosphorylation by PKC delta induces binding of MUC1 to beta-catenin/CTNNB1 and thus decreases the formation of the beta-catenin/E-cadherin complex. Src-mediated phosphorylation inhibits interaction with GSK3B. Csk- or Src- or EGFR-mediated phosphorylation on Tyr-651 increases binding to beta-catenin/CTNNB1. GSK3B-mediated phosphorylation on Ser-649 decreases this interaction but restores the formation of the beta-cadherin/E-cadherin complex. On T-cell receptor activation, phosphorylated by LCK. PDGFR-mediated phosphorylation increases nuclear colocalization of MUC1CT and CTNNB1.

The protein localises to the apical cell membrane. Its subcellular location is the cell membrane. The protein resides in the cytoplasm. It is found in the nucleus. The alpha subunit has cell adhesive properties. Can act both as an adhesion and an anti-adhesion protein. May provide a protective layer on epithelial cells against bacterial and enzyme attack. Functionally, the beta subunit contains a C-terminal domain which is involved in cell signaling, through phosphorylations and protein-protein interactions. Modulates signaling in ERK, Src and NF-kappaB pathways. In activated T-cells, influences directly or indirectly the Ras/MAPK pathway. Promotes tumor progression. Regulates P53-mediated transcription and determines cell fate in the genotoxic stress response. Binds, together with KLF4, the PE21 promoter element of P53 and represses P53 activity. This chain is Mucin-1 (MUC1), found in Mesocricetus auratus (Golden hamster).